The following is a 329-amino-acid chain: MIPRWQPASIALLLHLDTLRCHHVSVRPPRATMTSLSIKEEDIPRLDGKVVVISGGASGIGLAAANIFARAGAKIFLFDRNPPDSGEAPENSTFIKADVTSWAELKAAFAQAGHVDIAVANAGVSEEQPYFEDTFDEQGELKEPGFAVVDVNFKGTVMFTKLAVSYMRKQGKGGSVVITASATGYAPEQNLPVYSAIKSGLVGLVRSLRSTLPRFDISINAVAPAATITKLLPMDIAGPLMAAGLPVSSAHMVGLAVVYSAVARQPRMVETYGKENMLDLESKWNGRTILTLGEHYTELEEKLADLRPVWFGWRNTDLTKKQQATADFR.

The signal sequence occupies residues M1–C21. NADP(+)-binding residues include S58, I60, and N81. A glycan (N-linked (GlcNAc...) asparagine) is linked at N91. NADP(+) contacts are provided by D98, N121, K161, Y194, K198, and T229. Y194 (proton acceptor) is an active-site residue. K198 functions as the Lowers pKa of active site Tyr in the catalytic mechanism. The chain crosses the membrane as a helical span at residues G238–V258.

Belongs to the short-chain dehydrogenases/reductases (SDR) family.

The protein localises to the membrane. It participates in sesquiterpene biosynthesis. Functionally, short-chain dehydrogenase/reductase; part of the gene cluster that mediates the biosynthesis of PR-toxin, a bicyclic sesquiterpene belonging to the eremophilane class and acting as a mycotoxin. The first step of the pathway is catalyzed by the aristolochene synthase which performs the cyclization of trans,trans-farnesyl diphosphate (FPP) to the bicyclic sesquiterpene aristolochene. Following the formation of aristolochene, the non-oxygenated aristolochene is converted to the trioxygenated intermediate eremofortin B, via 7-epi-neopetasone. This conversion appears to involve three enzymes, a hydroxysterol oxidase-like enzyme, the quinone-oxidase prx3 that forms the quinone-type-structure in the bicyclic nucleus of aristolochene with the C8-oxo group and the C-3 hydroxyl group, and the P450 monooxygenase prx9 that introduces the epoxide at the double bond between carbons 1 and 2. No monoxy or dioxy-intermediates have been reported to be released to the broth, so these three early oxidative reactions may be coupled together. Eremofortin B is further oxidized by another P450 monooxygenase, that introduces a second epoxide between carbons 7 and 11 prior to acetylation to eremofortin A by the acetyltransferase prx11. The second epoxidation may be performed by a second P450 monooxygenase. After the acetylation step, eremofortin A is converted to eremofortin C and then to PR-toxin. First the conversion of eremofortin A to eremofortin C proceeds by oxidation of the side chain of the molecule at C-12 and is catalyzed by the short-chain oxidoreductase prx1. The cytochrome P450 monooxygenase prx8 also plays a role in this step. The primary alcohol formed at C-12 is finally oxidized by the short-chain alcohol dehydrogenase prx4 that forms PR-toxin. The polypeptide is Short-chain dehydrogenase/reductase prx4 (Penicillium rubens (strain ATCC 28089 / DSM 1075 / NRRL 1951 / Wisconsin 54-1255) (Penicillium chrysogenum)).